A 255-amino-acid chain; its full sequence is tRNA pseudouridine synthase A (255 aa).

The active-site Nucleophile is Asp-52. Residue Tyr-111 participates in substrate binding.

Belongs to the tRNA pseudouridine synthase TruA family. As to quaternary structure, homodimer.

The enzyme catalyses uridine(38/39/40) in tRNA = pseudouridine(38/39/40) in tRNA. Formation of pseudouridine at positions 38, 39 and 40 in the anticodon stem and loop of transfer RNAs. The polypeptide is tRNA pseudouridine synthase A (Cereibacter sphaeroides (strain KD131 / KCTC 12085) (Rhodobacter sphaeroides)).